The sequence spans 451 residues: UDP-N-acetyl-alpha-D-muramoyl-L-alanyl-L-glutamate epimerase (451 aa).

This sequence belongs to the MurL family.

It catalyses the reaction UDP-N-acetyl-alpha-D-muramoyl-L-alanyl-L-glutamate + ATP + H2O = UDP-N-acetyl-alpha-D-muramoyl-L-alanyl-D-glutamate + AMP + diphosphate + H(+). Its pathway is cell wall biogenesis; peptidoglycan biosynthesis. Its function is as follows. Cell wall formation. Catalyzes epimerization of the terminal L-glutamate in UDP-N-acetyl-alpha-D-muramoyl-L-alanyl-L-glutamate. The sequence is that of UDP-N-acetyl-alpha-D-muramoyl-L-alanyl-L-glutamate epimerase from Xanthomonas oryzae pv. oryzae (strain MAFF 311018).